We begin with the raw amino-acid sequence, 634 residues long: Replication protein E1 (634 aa).

The Nuclear localization signal signature appears at 84-86 (KRK). A Phosphoserine; by host modification is found at Ser-90. The segment covering 91–115 (QNSPLQDITNQSNSQQSTDEVNNLQ) has biased composition (polar residues). The interval 91 to 128 (QNSPLQDITNQSNSQQSTDEVNNLQAKRRAVDSVPDSG) is disordered. A DNA-binding region region spans residues 172–338 (AQASSVTKIC…QTQLEHSFED (167 aa)). Residues 437–587 (VNFIYFLQVL…FPFDSNGNPV (151 aa)) enclose the SF3 helicase domain. Residue 463 to 470 (GPPNTGKS) coordinates ATP.

It belongs to the papillomaviridae E1 protein family. As to quaternary structure, can form hexamers. Interacts with E2 protein; this interaction increases E1 DNA binding specificity. Interacts with host DNA polymerase subunit POLA2. Interacts with host single stranded DNA-binding protein RPA1. Interacts with host TOP1; this interaction stimulates the enzymatic activity of TOP1. Phosphorylated.

Its subcellular location is the host nucleus. The catalysed reaction is Couples ATP hydrolysis with the unwinding of duplex DNA by translocating in the 3'-5' direction.. The enzyme catalyses ATP + H2O = ADP + phosphate + H(+). In terms of biological role, ATP-dependent DNA 3'-5' helicase required for initiation of viral DNA replication. It forms a complex with the viral E2 protein. The E1-E2 complex binds to the replication origin which contains binding sites for both proteins. During the initial step, a dimer of E1 interacts with a dimer of protein E2 leading to a complex that binds the viral origin of replication with high specificity. Then, a second dimer of E1 displaces the E2 dimer in an ATP-dependent manner to form the E1 tetramer. Following this, two E1 monomers are added to each half of the site, which results in the formation of two E1 trimers on the viral ori. Subsequently, two hexamers will be created. The double hexamer acts as a bi-directional helicase machinery and unwinds the viral DNA and then recruits the host DNA polymerase to start replication. This Human papillomavirus 69 protein is Replication protein E1.